Here is a 203-residue protein sequence, read N- to C-terminus: Guanylate kinase (203 aa).

One can recognise a Guanylate kinase-like domain in the interval 3-181 (GTLYIVAAPS…AVSEMCAIFT (179 aa)). 10–17 (APSGAGKS) is an ATP binding site.

Belongs to the guanylate kinase family.

It is found in the cytoplasm. It catalyses the reaction GMP + ATP = GDP + ADP. Functionally, essential for recycling GMP and indirectly, cGMP. This Xanthomonas oryzae pv. oryzae (strain MAFF 311018) protein is Guanylate kinase.